The chain runs to 386 residues: Trichocyst matrix protein T2-B (386 aa).

Positions 1–19 (MKTIILALALIALVSSTQS) are cleaved as a signal peptide. Residues 20-48 (DVIDTIKKIDQSPFGRTLFDTIWLELQTG) constitute a propeptide that is removed on maturation. Residues 51-154 (LDRLVSTLTD…AEEHEDFEEK (104 aa)) are a coiled coil. Positions 184-238 (KGKAAKQPHKFTKDVANLIQKHFTTSAKKTAKFQHRKGYSKLFKAFATIASKVEQ) are excised as a propeptide. Positions 294 to 325 (ALANAISDLAALNDIIAQVEASLDTTVQRIEN) form a coiled coil.

Belongs to the TMP family.

The protein localises to the trichocyst. In terms of biological role, structural protein that crystallize inside the trichocyst matrix. This is Trichocyst matrix protein T2-B (T2B) from Paramecium tetraurelia.